Consider the following 101-residue polypeptide: Large ribosomal subunit protein uL24 (101 aa).

The protein belongs to the universal ribosomal protein uL24 family. In terms of assembly, part of the 50S ribosomal subunit.

One of two assembly initiator proteins, it binds directly to the 5'-end of the 23S rRNA, where it nucleates assembly of the 50S subunit. In terms of biological role, one of the proteins that surrounds the polypeptide exit tunnel on the outside of the subunit. This Paracoccus denitrificans (strain Pd 1222) protein is Large ribosomal subunit protein uL24.